We begin with the raw amino-acid sequence, 1036 residues long: Zinc finger protein 532 (1036 aa).

4 disordered regions span residues 26–92, 106–206, 220–265, and 281–362; these read PKAA…LHNG, GAKS…EAES, RKAE…PSSK, and AASD…KVRI. The span at 32–52 shows a compositional bias: basic and acidic residues; that stretch reads SGHDDHESHIKQNAHVDDDSH. Phosphoserine is present on residues Ser-130, Ser-133, and Ser-134. Residues 136 to 151 show a composition bias toward acidic residues; sequence EEFEDDEKIEVDDPPD. The residue at position 175 (Lys-175) is an N6-acetyllysine. Residues 182 to 193 show a composition bias toward polar residues; it reads ENSSKTGVSTSG. 2 stretches are compositionally biased toward basic and acidic residues: residues 194–205 and 220–249; these read HTDKNKVKREAE and RKAE…EKSD. The segment covering 253–265 has biased composition (low complexity); it reads AAAASSKTKPSSK. A compositionally biased stretch (basic and acidic residues) spans 302–314; it reads EVNDSPKAADKSP. Phosphoserine occurs at positions 306 and 313. Over residues 336–353 the composition is skewed to low complexity; sequence SVSSENSSKGSPSSPVGS. At Ser-433 the chain carries Phosphoserine. Glycyl lysine isopeptide (Lys-Gly) (interchain with G-Cter in SUMO2) cross-links involve residues Lys-458 and Lys-515. Residues 615–634 form a C2H2-type 1; degenerate zinc finger; that stretch reads YKCLECGDAFALEKSLSQHY. Residues 751-775 form a C2H2-type 2; degenerate zinc finger; it reads LKCLECNEVFQDEPSLATHFQHAAD. A C2H2-type 3 zinc finger spans residues 784–807; sequence HPCRQCDKSFSSSHSLCRHNRIKH. Residues 814–840 form a C2H2-type 4; degenerate zinc finger; the sequence is YACSHCPDSRRTFTKRLMLERHIQLMH. The tract at residues 847-877 is disordered; that stretch reads VKELSDDAGDVTNDEEEEAEIKEDAKVPSPK. Over residues 852-867 the composition is skewed to acidic residues; it reads DDAGDVTNDEEEEAEI. A compositionally biased stretch (basic and acidic residues) spans 868-877; it reads KEDAKVPSPK. At Ser-875 the chain carries Phosphoserine. Residues Lys-879 and Lys-902 each participate in a glycyl lysine isopeptide (Lys-Gly) (interchain with G-Cter in SUMO2) cross-link. 2 C2H2-type zinc fingers span residues 938-961 and 999-1021; these read HQCR…FIVH and RKCK…MRTH. The interval 966 to 1000 is disordered; it reads PQPVSKQNGAGEDSQQENKPSPEDEAAEGAASDRK.

This sequence belongs to the krueppel C2H2-type zinc-finger protein family.

Its subcellular location is the nucleus. May be involved in transcriptional regulation. The sequence is that of Zinc finger protein 532 (Znf532) from Mus musculus (Mouse).